We begin with the raw amino-acid sequence, 288 residues long: Quinate/shikimate dehydrogenase (288 aa).

Substrate is bound by residues lysine 71 and aspartate 107. Residues 132-135, 155-158, lysine 205, 232-235, and glycine 255 contribute to the NAD(+) site; these read AGGA, NRRD, and CVYN.

Belongs to the shikimate dehydrogenase family. In terms of assembly, homodimer.

It catalyses the reaction L-quinate + NAD(+) = 3-dehydroquinate + NADH + H(+). The catalysed reaction is L-quinate + NADP(+) = 3-dehydroquinate + NADPH + H(+). The enzyme catalyses shikimate + NADP(+) = 3-dehydroshikimate + NADPH + H(+). It carries out the reaction shikimate + NAD(+) = 3-dehydroshikimate + NADH + H(+). It functions in the pathway metabolic intermediate biosynthesis; chorismate biosynthesis; chorismate from D-erythrose 4-phosphate and phosphoenolpyruvate: step 4/7. Functionally, the actual biological function of YdiB remains unclear, nor is it known whether 3-dehydroshikimate or quinate represents the natural substrate. Catalyzes the reversible NAD-dependent reduction of both 3-dehydroshikimate (DHSA) and 3-dehydroquinate to yield shikimate (SA) and quinate, respectively. It can use both NAD or NADP for catalysis, however it has higher catalytic efficiency with NAD. The sequence is that of Quinate/shikimate dehydrogenase from Escherichia coli O81 (strain ED1a).